A 908-amino-acid polypeptide reads, in one-letter code: Disease resistance protein RPP8 (908 aa).

Residues 15–57 (DLLSRESERLQGIDGQLDGLKRQLRSLQSLLKDADAKKHGSDR) are a coiled coil. The NB-ARC domain occupies 146–459 (RQRVQREIRQ…AEGIYDGSTI (314 aa)). ATP is bound at residue 192 to 199 (GMGGIGKT). LRR repeat units follow at residues 575-600 (LTLLRVLDLSWVKFEGGKLPCSIGGL), 601-623 (IHLRYLSLYEAKVSHLPSTMRNL), 648-673 (MIQLRYLSLPLKMDDKTKLELGDLVN), 693-718 (MTKLRYLAVSLSERCNFETLSSSLRE), 722-746 (LETLNFLFSLETYMVDYMGEFVLDH), 748-770 (IHLKQLGLAVRMSKIPDQHQFPP), 793-820 (LLHLKSVRLARKAFLGSRMVCSKGGFPQ), 842-867 (MPCLRTLTIDDCKKLKELPDGLKYIT), and 882-905 (KEKLVPGGEDYYKVQHIPDVQFIN).

It belongs to the disease resistance NB-LRR family. RPP8/HRT subfamily. In terms of assembly, interacts with the NAC protein TIP. Interacts with MORC1/CRT1. Interacts with COP1 and is subsequently degraded in a 26s proteasome dependent manner. Mostly expressed in leaves, and, to a lower extent, in roots.

It localises to the cell membrane. Functionally, disease resistance protein. Resistance proteins guard the plant against pathogens that contain an appropriate avirulence protein via an indirect interaction with this avirulence protein. That triggers a defense system including the hypersensitive response, which restricts the pathogen growth. The interaction with TIP (TCV-interacting protein) may be essential for the recognition of the avirulence proteins, and the triggering of the defense response. Triggers resistance to turnip crinkle virus (TCV) via a SAG101-dependent pathway. This chain is Disease resistance protein RPP8 (RPP8), found in Arabidopsis thaliana (Mouse-ear cress).